The following is a 592-amino-acid chain: Aspartate--tRNA(Asp/Asn) ligase (592 aa).

Glu-175 lines the L-aspartate pocket. Residues 199–202 (QLFK) form an aspartate region. Arg-221 lines the L-aspartate pocket. ATP-binding positions include 221–223 (RDE) and Gln-230. His-450 contributes to the L-aspartate binding site. Glu-483 provides a ligand contact to ATP. Residue Arg-490 participates in L-aspartate binding. Residue 535–538 (GLDR) participates in ATP binding.

It belongs to the class-II aminoacyl-tRNA synthetase family. Type 1 subfamily. As to quaternary structure, homodimer.

The protein localises to the cytoplasm. It carries out the reaction tRNA(Asx) + L-aspartate + ATP = L-aspartyl-tRNA(Asx) + AMP + diphosphate. Aspartyl-tRNA synthetase with relaxed tRNA specificity since it is able to aspartylate not only its cognate tRNA(Asp) but also tRNA(Asn). Reaction proceeds in two steps: L-aspartate is first activated by ATP to form Asp-AMP and then transferred to the acceptor end of tRNA(Asp/Asn). This chain is Aspartate--tRNA(Asp/Asn) ligase, found in Acinetobacter baylyi (strain ATCC 33305 / BD413 / ADP1).